A 240-amino-acid polypeptide reads, in one-letter code: Serine protease SplB (240 aa).

The first 36 residues, 1–36, serve as a signal peptide directing secretion; the sequence is MNKNVVIKSLAALTILTSVTGIGITLVEEVQQTAKA. Active-site charge relay system residues include histidine 75, aspartate 113, and serine 193.

This sequence belongs to the peptidase S1B family.

The protein localises to the secreted. Serine protease that cleaves specifically after the sequence Trp-Glu-Leu-Gln. The sequence is that of Serine protease SplB (splB) from Staphylococcus aureus (strain MW2).